Consider the following 84-residue polypeptide: UPF0153 protein YeiW (84 aa).

This sequence belongs to the UPF0153 family.

The sequence is that of UPF0153 protein YeiW (yeiW) from Escherichia coli (strain K12).